Consider the following 413-residue polypeptide: ORC1-type DNA replication protein 2 (413 aa).

Residues 70–74 (TGKTA), Tyr-217, and Arg-229 contribute to the ATP site.

Belongs to the CDC6/cdc18 family. In terms of assembly, monomer. Interacts with Cdc6-3, MCM and PolB1. Post-translationally, autophosphorylated in vitro.

Involved in regulation of DNA replication. May play essential roles in origin recognition and cell cycle control of replication. Binds both single-stranded and double-stranded DNA, with a preference for molecules that contain a bubble, a fork, or a tail. Has a weak ATPase activity. Stimulates the binding of the MCM helicase to the origin DNA, but strongly inhibits ATPase and DNA helicase activities of MCM. Also regulates the DNA polymerase and the nuclease activities of PolB1. This is ORC1-type DNA replication protein 2 (cdc6-2) from Saccharolobus solfataricus (strain ATCC 35092 / DSM 1617 / JCM 11322 / P2) (Sulfolobus solfataricus).